Consider the following 178-residue polypeptide: Thymidine kinase (178 aa).

13–20 (GPMFAGKS) serves as a coordination point for ATP. Glutamate 85 (proton acceptor) is an active-site residue. Phenylalanine 115 is a substrate binding site. Zn(2+) contacts are provided by cysteine 140 and cysteine 143. 159-163 (IEIIG) contributes to the substrate binding site. Zn(2+) is bound by residues cysteine 172 and cysteine 175.

Belongs to the thymidine kinase family.

The catalysed reaction is thymidine + ATP = dTMP + ADP + H(+). The sequence is that of Thymidine kinase (TK) from Myxoma virus (strain Uriarra) (MYXV).